We begin with the raw amino-acid sequence, 281 residues long: Glyceraldehyde dehydrogenase medium chain (281 aa).

One can recognise an FAD-binding PCMH-type domain in the interval 1–176; the sequence is MYPPEFSYVR…TQIEVPVLDG (176 aa). FAD contacts are provided by residues 31–35 and 110–114; these read AGGQS and TIGGA.

As to quaternary structure, heterotrimer composed of a large chain (CutA), a medium chain (CutB) and a small chain (CutC). FAD is required as a cofactor.

The protein resides in the cytoplasm. The enzyme catalyses D-glyceraldehyde + A + H2O = (R)-glycerate + AH2 + H(+). Its function is as follows. Component of the glyceraldehyde dehydrogenase which is involved the nonphosphorylated Entner-Doudoroff pathway. Catalyzes the oxidation of D-glyceraldehyde to yield glycerate. When the artificial electron acceptor 2,6-dichlorophenol-indophenol (Cl2Ind) is used, the enzyme shows a broad substrate range (glyceraldehyde-3-phosphate, formaldehyde, acetaldehyde, propionaldehyde and isobutyraldehyde), but is most active with D-glyceraldehyde. It is not known which acceptor is utilized in vivo. This is Glyceraldehyde dehydrogenase medium chain (cutB) from Sulfolobus acidocaldarius (strain ATCC 33909 / DSM 639 / JCM 8929 / NBRC 15157 / NCIMB 11770).